We begin with the raw amino-acid sequence, 522 residues long: Protein nucleotidyltransferase YdiU (522 aa).

Residues glycine 109, glycine 111, arginine 112, lysine 132, aspartate 144, glycine 145, arginine 195, and arginine 202 each coordinate ATP. The active-site Proton acceptor is aspartate 271. Mg(2+) is bound by residues asparagine 272 and aspartate 281. Aspartate 281 serves as a coordination point for ATP.

This sequence belongs to the SELO family. Mg(2+) serves as cofactor. Requires Mn(2+) as cofactor.

It catalyses the reaction L-seryl-[protein] + ATP = 3-O-(5'-adenylyl)-L-seryl-[protein] + diphosphate. The catalysed reaction is L-threonyl-[protein] + ATP = 3-O-(5'-adenylyl)-L-threonyl-[protein] + diphosphate. The enzyme catalyses L-tyrosyl-[protein] + ATP = O-(5'-adenylyl)-L-tyrosyl-[protein] + diphosphate. It carries out the reaction L-histidyl-[protein] + UTP = N(tele)-(5'-uridylyl)-L-histidyl-[protein] + diphosphate. It catalyses the reaction L-seryl-[protein] + UTP = O-(5'-uridylyl)-L-seryl-[protein] + diphosphate. The catalysed reaction is L-tyrosyl-[protein] + UTP = O-(5'-uridylyl)-L-tyrosyl-[protein] + diphosphate. Nucleotidyltransferase involved in the post-translational modification of proteins. It can catalyze the addition of adenosine monophosphate (AMP) or uridine monophosphate (UMP) to a protein, resulting in modifications known as AMPylation and UMPylation. This is Protein nucleotidyltransferase YdiU from Burkholderia vietnamiensis (strain G4 / LMG 22486) (Burkholderia cepacia (strain R1808)).